We begin with the raw amino-acid sequence, 485 residues long: Glutamate--tRNA ligase 2 (485 aa).

Residues 10 to 20 carry the 'HIGH' region motif; sequence PSPTGPIHIGN. A 'KMSKS' region motif is present at residues 252 to 256; sequence KLSKR. Residue Lys-255 coordinates ATP.

It belongs to the class-I aminoacyl-tRNA synthetase family. Glutamate--tRNA ligase type 1 subfamily. As to quaternary structure, monomer.

Its subcellular location is the cytoplasm. It catalyses the reaction tRNA(Glu) + L-glutamate + ATP = L-glutamyl-tRNA(Glu) + AMP + diphosphate. Catalyzes the attachment of glutamate to tRNA(Glu) in a two-step reaction: glutamate is first activated by ATP to form Glu-AMP and then transferred to the acceptor end of tRNA(Glu). The sequence is that of Glutamate--tRNA ligase 2 from Caldanaerobacter subterraneus subsp. tengcongensis (strain DSM 15242 / JCM 11007 / NBRC 100824 / MB4) (Thermoanaerobacter tengcongensis).